The following is a 127-amino-acid chain: Large ribosomal subunit protein bL17 (127 aa).

Belongs to the bacterial ribosomal protein bL17 family. Part of the 50S ribosomal subunit. Contacts protein L32.

This Xanthomonas axonopodis pv. citri (strain 306) protein is Large ribosomal subunit protein bL17.